Reading from the N-terminus, the 353-residue chain is Phospho-N-acetylmuramoyl-pentapeptide-transferase (353 aa).

The next 10 membrane-spanning stretches (helical) occupy residues 24-44 (LGFF…ILWA), 66-86 (TPTM…VLCA), 88-108 (LSNL…FVGF), 129-149 (FGML…KGLD), 160-180 (PLFE…FLST), 192-212 (GLAS…VYVA), 229-249 (VGEL…FLWY), 256-276 (VFMG…NAIV), 281-301 (ILLV…ILQV), and 330-350 (KVIV…LLSL).

The protein belongs to the glycosyltransferase 4 family. MraY subfamily. It depends on Mg(2+) as a cofactor.

The protein resides in the cell inner membrane. It catalyses the reaction UDP-N-acetyl-alpha-D-muramoyl-L-alanyl-gamma-D-glutamyl-meso-2,6-diaminopimeloyl-D-alanyl-D-alanine + di-trans,octa-cis-undecaprenyl phosphate = di-trans,octa-cis-undecaprenyl diphospho-N-acetyl-alpha-D-muramoyl-L-alanyl-D-glutamyl-meso-2,6-diaminopimeloyl-D-alanyl-D-alanine + UMP. It participates in cell wall biogenesis; peptidoglycan biosynthesis. In terms of biological role, catalyzes the initial step of the lipid cycle reactions in the biosynthesis of the cell wall peptidoglycan: transfers peptidoglycan precursor phospho-MurNAc-pentapeptide from UDP-MurNAc-pentapeptide onto the lipid carrier undecaprenyl phosphate, yielding undecaprenyl-pyrophosphoryl-MurNAc-pentapeptide, known as lipid I. In Helicobacter pylori (strain J99 / ATCC 700824) (Campylobacter pylori J99), this protein is Phospho-N-acetylmuramoyl-pentapeptide-transferase.